An 888-amino-acid polypeptide reads, in one-letter code: Leukocyte tyrosine kinase receptor (888 aa).

The signal sequence occupies residues 1-16; sequence MGCSHRLLLWLGAAGT. At 17 to 421 the chain is on the extracellular side; the sequence is ILCSNSEFQT…CMDLPTTASP (405 aa). Intrachain disulfides connect C73–C86 and C168–C179. Positions 226 to 294 are disordered; sequence LVAAGGGGRS…RSPREGAEGG (69 aa). Residues 260–273 are compositionally biased toward gly residues; that stretch reads GSGGRGGAAGGGSG. Cysteines 297 and 319 form a disulfide. N-linked (GlcNAc...) asparagine glycosylation is found at N377 and N409. Residues 422-446 form a helical membrane-spanning segment; sequence LILMGAVVAALALSLLMMCAVLILV. Topologically, residues 447 to 888 are cytoplasmic; the sequence is NQKCQGLWGT…SSSSSIPGIQ (442 aa). The Protein kinase domain maps to 506 to 782; that stretch reads VTLLRALGHG…IQYCTQDPDV (277 aa). ATP contacts are provided by residues 512 to 520 and K540; that span reads LGHGAFGEV. The Proton acceptor role is filled by D639. Position 672 is a phosphotyrosine; by autocatalysis (Y672). The disordered stretch occupies residues 857-888; sequence TYGSWTPRGPQGEDTGIEHCNGSSSSSIPGIQ. Residues 877 to 888 are compositionally biased toward polar residues; the sequence is NGSSSSSIPGIQ.

It belongs to the protein kinase superfamily. Tyr protein kinase family. Insulin receptor subfamily. As to quaternary structure, homodimer; homodimerizes following ligand-binding. Part of a complex including LTK, TNK2 and GRB2, in which GRB2 promotes LTK recruitment by TNK2. Phosphorylated at tyrosine residues by autocatalysis, which activates kinase activity. Subsets of lymphoid and neuronal cells.

It is found in the cell membrane. The protein resides in the endoplasmic reticulum. The catalysed reaction is L-tyrosyl-[protein] + ATP = O-phospho-L-tyrosyl-[protein] + ADP + H(+). Activated by ligand-binding, leading to homodimerization and autophosphorylation. Receptor with a tyrosine-protein kinase activity. Following activation by ALKAL1 or ALKAL2 ligands at the cell surface, transduces an extracellular signal into an intracellular response. Ligand-binding to the extracellular domain induces tyrosine kinase activation, leading to activation of the mitogen-activated protein kinase (MAPK) pathway. Phosphorylates almost exclusively at the first tyrosine of the Y-x-x-x-Y-Y motif. The exact function of this protein is not known; studies with chimeric proteins demonstrate its ability to promote growth and specifically neurite outgrowth, and cell survival. Involved in regulation of the secretory pathway involving endoplasmic reticulum (ER) export sites (ERESs) and ER to Golgi transport. The polypeptide is Leukocyte tyrosine kinase receptor (Mus musculus (Mouse)).